The following is a 184-amino-acid chain: Peptide deformylase (184 aa).

Fe cation-binding residues include Cys-98 and His-140. Glu-141 is an active-site residue. A Fe cation-binding site is contributed by His-144.

Belongs to the polypeptide deformylase family. Fe(2+) is required as a cofactor.

The enzyme catalyses N-terminal N-formyl-L-methionyl-[peptide] + H2O = N-terminal L-methionyl-[peptide] + formate. Functionally, removes the formyl group from the N-terminal Met of newly synthesized proteins. Requires at least a dipeptide for an efficient rate of reaction. N-terminal L-methionine is a prerequisite for activity but the enzyme has broad specificity at other positions. The polypeptide is Peptide deformylase (Bacteroides thetaiotaomicron (strain ATCC 29148 / DSM 2079 / JCM 5827 / CCUG 10774 / NCTC 10582 / VPI-5482 / E50)).